The following is a 241-amino-acid chain: RxLR effector protein SFI5 (241 aa).

A signal peptide spans 1-20; it reads MLRQARPLVVLIAVTFLVAS. The short motif at 44 to 62 is the RxLR-dEER element; it reads RLLRTHHATIKVNADSEER.

The protein belongs to the RxLR effector family.

It localises to the secreted. The protein resides in the host cell membrane. In terms of biological role, effector that suppresses flg22-induced post-translational MAP kinase activation in tomato but not in Arabidopsis. The perception of highly conserved pathogen- or microbe-associated molecular patterns (PAMPs/MAMPs), such as flg22, triggers converging signaling pathways recruiting MAP kinase cascades and inducing transcriptional re-programming, yielding a generic antimicrobial response. The protein is RxLR effector protein SFI5 of Phytophthora infestans (strain T30-4) (Potato late blight agent).